We begin with the raw amino-acid sequence, 840 residues long: Protein translocase subunit SecA (840 aa).

Residues Gln85, 103–107 (GEGKT), and Asp492 each bind ATP. The interval 787–821 (QRERVAKETGASHGGDSQEIKKKPVKKEPKVGRND) is disordered. Residues 802–819 (DSQEIKKKPVKKEPKVGR) show a composition bias toward basic and acidic residues. Residues Cys823, Cys825, Cys834, and Cys835 each contribute to the Zn(2+) site.

Belongs to the SecA family. As to quaternary structure, monomer and homodimer. Part of the essential Sec protein translocation apparatus which comprises SecA, SecYEG and auxiliary proteins SecDF. Other proteins may also be involved. Requires Zn(2+) as cofactor.

It is found in the cell membrane. Its subcellular location is the cytoplasm. It carries out the reaction ATP + H2O + cellular proteinSide 1 = ADP + phosphate + cellular proteinSide 2.. Part of the Sec protein translocase complex. Interacts with the SecYEG preprotein conducting channel. Has a central role in coupling the hydrolysis of ATP to the transfer of proteins into and across the cell membrane, serving as an ATP-driven molecular motor driving the stepwise translocation of polypeptide chains across the membrane. The sequence is that of Protein translocase subunit SecA from Clostridium perfringens (strain 13 / Type A).